Reading from the N-terminus, the 607-residue chain is Acyl-coenzyme A thioesterase 11 (607 aa).

The N-terminal 13 residues, 1–13 (MIQNVGNHLRRGL), are a transit peptide targeting the mitochondrion. Phosphoserine occurs at positions 15 and 25. The 113-residue stretch at 43 to 155 (NPTEVQMSQL…LATFVARREI (113 aa)) folds into the HotDog ACOT-type 1 domain. CoA is bound by residues 91–93 (TAS), 120–122 (NSS), Arg181, and 271–273 (HFR). A HotDog ACOT-type 2 domain is found at 216-329 (EKTRVESVEL…FMTFVVLDAD (114 aa)). Residues 375–585 (LSVPWDPSNQ…GWNGKLAGGH (211 aa)) form the START domain.

In terms of tissue distribution, isoform 1 is predominantly expressed in skeletal muscle, liver, testis, stomach, spleen, lung and brain. Isoform 2 is predominantly expressed in kidney, uterus, hibernoma and white adipose tissue.

The protein resides in the mitochondrion matrix. Its subcellular location is the cytoplasm. It catalyses the reaction hexadecanoyl-CoA + H2O = hexadecanoate + CoA + H(+). The enzyme catalyses tetradecanoyl-CoA + H2O = tetradecanoate + CoA + H(+). It carries out the reaction dodecanoyl-CoA + H2O = dodecanoate + CoA + H(+). The catalysed reaction is butanoyl-CoA + H2O = butanoate + CoA + H(+). The protein operates within lipid metabolism; fatty acid metabolism. Its function is as follows. Has an acyl-CoA thioesterase activity with a preference for the long chain fatty acyl-CoA thioesters hexadecanoyl-CoA/palmitoyl-CoA and tetradecanoyl-CoA/myristoyl-CoA which are the main substrates in the mitochondrial beta-oxidation pathway. This Homo sapiens (Human) protein is Acyl-coenzyme A thioesterase 11 (ACOT11).